A 69-amino-acid chain; its full sequence is MFGLGGQELILILLIILLLFGAKKLPELARGLGKGMKEFKKAQTEIEEEFNSVVDEKPKKEKTASSTQS.

The chain crosses the membrane as a helical span at residues 1–21 (MFGLGGQELILILLIILLLFG).

Belongs to the TatA/E family. In terms of assembly, forms a complex with TatC.

The protein localises to the cell inner membrane. Part of the twin-arginine translocation (Tat) system that transports large folded proteins containing a characteristic twin-arginine motif in their signal peptide across membranes. TatA could form the protein-conducting channel of the Tat system. The protein is Sec-independent protein translocase protein TatA of Pelodictyon phaeoclathratiforme (strain DSM 5477 / BU-1).